Consider the following 157-residue polypeptide: 2-C-methyl-D-erythritol 2,4-cyclodiphosphate synthase (157 aa).

Residues aspartate 8 and histidine 10 each coordinate a divalent metal cation. Residues 8-10 (DVH) and 34-35 (HS) contribute to the 4-CDP-2-C-methyl-D-erythritol 2-phosphate site. A divalent metal cation is bound at residue histidine 42. Residues 56–58 (DLG), 61–65 (FPDTD), 132–135 (TTTE), phenylalanine 139, and arginine 142 contribute to the 4-CDP-2-C-methyl-D-erythritol 2-phosphate site.

Belongs to the IspF family. In terms of assembly, homotrimer. It depends on a divalent metal cation as a cofactor.

The catalysed reaction is 4-CDP-2-C-methyl-D-erythritol 2-phosphate = 2-C-methyl-D-erythritol 2,4-cyclic diphosphate + CMP. It participates in isoprenoid biosynthesis; isopentenyl diphosphate biosynthesis via DXP pathway; isopentenyl diphosphate from 1-deoxy-D-xylulose 5-phosphate: step 4/6. Its function is as follows. Involved in the biosynthesis of isopentenyl diphosphate (IPP) and dimethylallyl diphosphate (DMAPP), two major building blocks of isoprenoid compounds. Catalyzes the conversion of 4-diphosphocytidyl-2-C-methyl-D-erythritol 2-phosphate (CDP-ME2P) to 2-C-methyl-D-erythritol 2,4-cyclodiphosphate (ME-CPP) with a corresponding release of cytidine 5-monophosphate (CMP). This chain is 2-C-methyl-D-erythritol 2,4-cyclodiphosphate synthase, found in Salinibacter ruber (strain DSM 13855 / M31).